A 132-amino-acid polypeptide reads, in one-letter code: Small ribosomal subunit protein uS8 (132 aa).

The protein belongs to the universal ribosomal protein uS8 family. In terms of assembly, part of the 30S ribosomal subunit. Contacts proteins S5 and S12.

Its function is as follows. One of the primary rRNA binding proteins, it binds directly to 16S rRNA central domain where it helps coordinate assembly of the platform of the 30S subunit. In Rickettsia massiliae (strain Mtu5), this protein is Small ribosomal subunit protein uS8.